The primary structure comprises 365 residues: Holliday junction branch migration complex subunit RuvB (365 aa).

Residues 1–191 (MNFDPIDDFD…FGFTAHMDFY (191 aa)) are large ATPase domain (RuvB-L). Residues Leu30, Arg31, Gly72, Lys75, Thr76, Ser77, 138 to 140 (EDF), Arg181, Tyr191, and Arg228 each bind ATP. Thr76 is a binding site for Mg(2+). A small ATPAse domain (RuvB-S) region spans residues 192-262 (EPEELQQILM…VAQAALAVYD (71 aa)). The head domain (RuvB-H) stretch occupies residues 265–365 (QLGLDRLDRS…QATLFDPNGE (101 aa)). The DNA site is built by Arg320 and Arg325.

This sequence belongs to the RuvB family. In terms of assembly, homohexamer. Forms an RuvA(8)-RuvB(12)-Holliday junction (HJ) complex. HJ DNA is sandwiched between 2 RuvA tetramers; dsDNA enters through RuvA and exits via RuvB. An RuvB hexamer assembles on each DNA strand where it exits the tetramer. Each RuvB hexamer is contacted by two RuvA subunits (via domain III) on 2 adjacent RuvB subunits; this complex drives branch migration. In the full resolvosome a probable DNA-RuvA(4)-RuvB(12)-RuvC(2) complex forms which resolves the HJ.

The protein localises to the cytoplasm. It carries out the reaction ATP + H2O = ADP + phosphate + H(+). In terms of biological role, the RuvA-RuvB-RuvC complex processes Holliday junction (HJ) DNA during genetic recombination and DNA repair, while the RuvA-RuvB complex plays an important role in the rescue of blocked DNA replication forks via replication fork reversal (RFR). RuvA specifically binds to HJ cruciform DNA, conferring on it an open structure. The RuvB hexamer acts as an ATP-dependent pump, pulling dsDNA into and through the RuvAB complex. RuvB forms 2 homohexamers on either side of HJ DNA bound by 1 or 2 RuvA tetramers; 4 subunits per hexamer contact DNA at a time. Coordinated motions by a converter formed by DNA-disengaged RuvB subunits stimulates ATP hydrolysis and nucleotide exchange. Immobilization of the converter enables RuvB to convert the ATP-contained energy into a lever motion, pulling 2 nucleotides of DNA out of the RuvA tetramer per ATP hydrolyzed, thus driving DNA branch migration. The RuvB motors rotate together with the DNA substrate, which together with the progressing nucleotide cycle form the mechanistic basis for DNA recombination by continuous HJ branch migration. Branch migration allows RuvC to scan DNA until it finds its consensus sequence, where it cleaves and resolves cruciform DNA. This is Holliday junction branch migration complex subunit RuvB from Rhodococcus erythropolis (strain PR4 / NBRC 100887).